The sequence spans 707 residues: Elongation factor G (707 aa).

Residues 8–288 (QFTRNIGIMA…AVCKFLPSPA (281 aa)) form the tr-type G domain. GTP is bound by residues 17-24 (AHIDAGKT), 85-89 (DTPGH), and 139-142 (NKMD). The segment at 288–308 (ADTPTVEGTDPSDPNKVIERK) is disordered.

Belongs to the TRAFAC class translation factor GTPase superfamily. Classic translation factor GTPase family. EF-G/EF-2 subfamily.

It is found in the cytoplasm. Catalyzes the GTP-dependent ribosomal translocation step during translation elongation. During this step, the ribosome changes from the pre-translocational (PRE) to the post-translocational (POST) state as the newly formed A-site-bound peptidyl-tRNA and P-site-bound deacylated tRNA move to the P and E sites, respectively. Catalyzes the coordinated movement of the two tRNA molecules, the mRNA and conformational changes in the ribosome. In Porphyromonas gingivalis (strain ATCC 33277 / DSM 20709 / CIP 103683 / JCM 12257 / NCTC 11834 / 2561), this protein is Elongation factor G.